The chain runs to 450 residues: Glucose-6-phosphate isomerase (450 aa).

Thr-39 carries the phosphothreonine modification. The active-site Proton donor is the Glu-291. Active-site residues include His-312 and Lys-426.

This sequence belongs to the GPI family.

The protein resides in the cytoplasm. It carries out the reaction alpha-D-glucose 6-phosphate = beta-D-fructose 6-phosphate. Its pathway is carbohydrate biosynthesis; gluconeogenesis. It functions in the pathway carbohydrate degradation; glycolysis; D-glyceraldehyde 3-phosphate and glycerone phosphate from D-glucose: step 2/4. In terms of biological role, catalyzes the reversible isomerization of glucose-6-phosphate to fructose-6-phosphate. The chain is Glucose-6-phosphate isomerase from Bacillus cereus (strain ATCC 10987 / NRS 248).